The primary structure comprises 230 residues: Cytochrome c oxidase subunit 2 (230 aa).

Topologically, residues 1–14 are mitochondrial intermembrane; the sequence is MAHPSQLGFQDAAS. A helical transmembrane segment spans residues 15 to 45; that stretch reads PVMEELLHFHDHALMIVLLISTLVLYIIVAM. At 46-59 the chain is on the mitochondrial matrix side; the sequence is VSTKLTNMYILDSQ. A helical transmembrane segment spans residues 60 to 87; it reads EIEIVWTVLPAVILILIALPSLRILYLM. Over 88-230 the chain is Mitochondrial intermembrane; sequence DEINDPHLTI…KWSTMMLEDA (143 aa). 6 residues coordinate Cu cation: His-161, Cys-196, Glu-198, Cys-200, His-204, and Met-207. Glu-198 is a binding site for Mg(2+).

Belongs to the cytochrome c oxidase subunit 2 family. As to quaternary structure, component of the cytochrome c oxidase (complex IV, CIV), a multisubunit enzyme composed of 14 subunits. The complex is composed of a catalytic core of 3 subunits MT-CO1, MT-CO2 and MT-CO3, encoded in the mitochondrial DNA, and 11 supernumerary subunits COX4I, COX5A, COX5B, COX6A, COX6B, COX6C, COX7A, COX7B, COX7C, COX8 and NDUFA4, which are encoded in the nuclear genome. The complex exists as a monomer or a dimer and forms supercomplexes (SCs) in the inner mitochondrial membrane with NADH-ubiquinone oxidoreductase (complex I, CI) and ubiquinol-cytochrome c oxidoreductase (cytochrome b-c1 complex, complex III, CIII), resulting in different assemblies (supercomplex SCI(1)III(2)IV(1) and megacomplex MCI(2)III(2)IV(2)). Found in a complex with TMEM177, COA6, COX18, COX20, SCO1 and SCO2. Interacts with TMEM177 in a COX20-dependent manner. Interacts with COX20. Interacts with COX16. It depends on Cu cation as a cofactor.

It is found in the mitochondrion inner membrane. The enzyme catalyses 4 Fe(II)-[cytochrome c] + O2 + 8 H(+)(in) = 4 Fe(III)-[cytochrome c] + 2 H2O + 4 H(+)(out). Component of the cytochrome c oxidase, the last enzyme in the mitochondrial electron transport chain which drives oxidative phosphorylation. The respiratory chain contains 3 multisubunit complexes succinate dehydrogenase (complex II, CII), ubiquinol-cytochrome c oxidoreductase (cytochrome b-c1 complex, complex III, CIII) and cytochrome c oxidase (complex IV, CIV), that cooperate to transfer electrons derived from NADH and succinate to molecular oxygen, creating an electrochemical gradient over the inner membrane that drives transmembrane transport and the ATP synthase. Cytochrome c oxidase is the component of the respiratory chain that catalyzes the reduction of oxygen to water. Electrons originating from reduced cytochrome c in the intermembrane space (IMS) are transferred via the dinuclear copper A center (CU(A)) of subunit 2 and heme A of subunit 1 to the active site in subunit 1, a binuclear center (BNC) formed by heme A3 and copper B (CU(B)). The BNC reduces molecular oxygen to 2 water molecules using 4 electrons from cytochrome c in the IMS and 4 protons from the mitochondrial matrix. This is Cytochrome c oxidase subunit 2 (mt-co2) from Oncorhynchus mykiss (Rainbow trout).